The chain runs to 1155 residues: uncharacterized protein (1155 aa).

Positions 1–19 (MKKNIFITSLLILLLLLSS) are cleaved as a signal peptide. A lipid anchor (N-palmitoyl cysteine) is attached at Cys20. Cys20 carries S-diacylglycerol cysteine lipidation. 4 helical membrane passes run 289 to 309 (ISVSAILTLYIMFTVLSFLIG), 395 to 415 (LGFIYIILYLIALYFIFFLIF), 424 to 444 (ALITIGMIIIMGPIFICFMLF), and 459 to 479 (ISYALQPIILFAGIAFISMII).

Belongs to the TrbL/VirB6 family.

Its subcellular location is the cell membrane. This is an uncharacterized protein from Rickettsia prowazekii (strain Madrid E).